We begin with the raw amino-acid sequence, 660 residues long: DNA mismatch repair protein MutL (660 aa).

Disordered stretches follow at residues 368–426 (PQQT…PTKK) and 439–461 (NREQ…STQQ). Positions 406–417 (SSSSNSTAPSRS) are enriched in low complexity.

It belongs to the DNA mismatch repair MutL/HexB family.

Its function is as follows. This protein is involved in the repair of mismatches in DNA. It is required for dam-dependent methyl-directed DNA mismatch repair. May act as a 'molecular matchmaker', a protein that promotes the formation of a stable complex between two or more DNA-binding proteins in an ATP-dependent manner without itself being part of a final effector complex. This chain is DNA mismatch repair protein MutL, found in Aliivibrio fischeri (strain ATCC 700601 / ES114) (Vibrio fischeri).